A 745-amino-acid chain; its full sequence is Ribosomal protein S6 kinase alpha-6 (745 aa).

The segment at Met-1 to Val-28 is disordered. In terms of domain architecture, Protein kinase 1 spans Phe-73–Phe-330. Residues Leu-79–Val-87 and Lys-105 contribute to the ATP site. Asp-198 serves as the catalytic Proton acceptor. Phosphoserine occurs at positions 232, 372, and 389. An AGC-kinase C-terminal domain is found at Ala-331–Lys-400. The Protein kinase 2 domain occupies Tyr-426–Ile-683. Residues Ile-432 to Cys-440 and Lys-455 contribute to the ATP site. Asp-543 functions as the Proton acceptor in the catalytic mechanism. A Phosphothreonine modification is found at Thr-581.

It belongs to the protein kinase superfamily. AGC Ser/Thr protein kinase family. S6 kinase subfamily. In terms of assembly, forms a complex with MAPK3/ERK1 but not with MAPK9 or MAPK14 in serum-starved cells. The cofactor is Mg(2+). Post-translationally, phosphorylated at Ser-232, Ser-372, and Ser-389 in serum-starved cells.

Its subcellular location is the cytoplasm. The protein localises to the cytosol. It is found in the nucleus. The catalysed reaction is L-seryl-[protein] + ATP = O-phospho-L-seryl-[protein] + ADP + H(+). It catalyses the reaction L-threonyl-[protein] + ATP = O-phospho-L-threonyl-[protein] + ADP + H(+). Constitutively activated by phosphorylation at Ser-232, Ser-372, and Ser-389 in serum-starved cells. Does not require growth factor stimulation for significant kinase activity. Its function is as follows. Constitutively active serine/threonine-protein kinase that exhibits growth-factor-independent kinase activity and that may participate in p53/TP53-dependent cell growth arrest signaling and play an inhibitory role during embryogenesis. This Homo sapiens (Human) protein is Ribosomal protein S6 kinase alpha-6 (RPS6KA6).